Consider the following 112-residue polypeptide: DNA-binding protein Memar_1972 (112 aa).

A disordered region spans residues 14-35; it reads MEQMQRQAMDQQGMEEEAARQQ.

Belongs to the PDCD5 family.

The sequence is that of DNA-binding protein Memar_1972 from Methanoculleus marisnigri (strain ATCC 35101 / DSM 1498 / JR1).